The sequence spans 496 residues: ATP synthase subunit beta 1 (496 aa).

167-174 contributes to the ATP binding site; that stretch reads GGAGVGKT. A disordered region spans residues 474-496; it reads REAAAAQQSTAQQAAPAEKEPAA. Low complexity predominate over residues 476-489; that stretch reads AAAAQQSTAQQAAP.

The protein belongs to the ATPase alpha/beta chains family. F-type ATPases have 2 components, CF(1) - the catalytic core - and CF(0) - the membrane proton channel. CF(1) has five subunits: alpha(3), beta(3), gamma(1), delta(1), epsilon(1). CF(0) has three main subunits: a(1), b(2) and c(9-12). The alpha and beta chains form an alternating ring which encloses part of the gamma chain. CF(1) is attached to CF(0) by a central stalk formed by the gamma and epsilon chains, while a peripheral stalk is formed by the delta and b chains.

The protein localises to the cell inner membrane. The catalysed reaction is ATP + H2O + 4 H(+)(in) = ADP + phosphate + 5 H(+)(out). In terms of biological role, produces ATP from ADP in the presence of a proton gradient across the membrane. The catalytic sites are hosted primarily by the beta subunits. The protein is ATP synthase subunit beta 1 of Paraburkholderia xenovorans (strain LB400).